Consider the following 514-residue polypeptide: Bifunctional purine biosynthesis protein PurH (514 aa).

Residues 1–145 (MIKRALISVS…KNYQDVVVIV (145 aa)) enclose the MGS-like domain.

Belongs to the PurH family.

The enzyme catalyses (6R)-10-formyltetrahydrofolate + 5-amino-1-(5-phospho-beta-D-ribosyl)imidazole-4-carboxamide = 5-formamido-1-(5-phospho-D-ribosyl)imidazole-4-carboxamide + (6S)-5,6,7,8-tetrahydrofolate. It catalyses the reaction IMP + H2O = 5-formamido-1-(5-phospho-D-ribosyl)imidazole-4-carboxamide. The protein operates within purine metabolism; IMP biosynthesis via de novo pathway; 5-formamido-1-(5-phospho-D-ribosyl)imidazole-4-carboxamide from 5-amino-1-(5-phospho-D-ribosyl)imidazole-4-carboxamide (10-formyl THF route): step 1/1. Its pathway is purine metabolism; IMP biosynthesis via de novo pathway; IMP from 5-formamido-1-(5-phospho-D-ribosyl)imidazole-4-carboxamide: step 1/1. In Acetivibrio thermocellus (strain ATCC 27405 / DSM 1237 / JCM 9322 / NBRC 103400 / NCIMB 10682 / NRRL B-4536 / VPI 7372) (Clostridium thermocellum), this protein is Bifunctional purine biosynthesis protein PurH.